The sequence spans 478 residues: Transcript termination protein A18 (478 aa).

Residues 98–254 form the Helicase ATP-binding domain; the sequence is KLSTHRPMYM…NDVVNVLKVS (157 aa). 111–118 lines the ATP pocket; it reads LSCGFGKT. The DESH box motif lies at 204–207; the sequence is DESH. The 153-residue stretch at 302–454 folds into the Helicase C-terminal domain; it reads PRNNLIVDTV…IVSVSTDKLG (153 aa). A disordered region spans residues 456-478; sequence QQEGKEGTKEEPALTKAFSSQIR. Over residues 458-468 the composition is skewed to basic and acidic residues; the sequence is EGKEGTKEEPA.

This sequence belongs to the helicase family. Poxviruses subfamily. As to quaternary structure, interacts with G2. Might be part of a transcription complex composed at least of G2, A18, and H5.

Its subcellular location is the virion. DNA helicase which seems to act as a postreplicative transcription termination factor. Involved in ATP-dependent release of nascent RNA. Forms a stable complex with single-stranded DNA, and to a lesser extent RNA. The chain is Transcript termination protein A18 from Oryctolagus cuniculus (Rabbit).